The sequence spans 783 residues: E3 UFM1-protein ligase 1 homolog (783 aa).

Positions 404 to 482 (SNSSANFDAD…AGSSRKSVKP (79 aa)) are disordered. Residues 445-457 (KSTKKHQRGRAAA) show a composition bias toward basic residues.

It belongs to the UFL1 family.

Its function is as follows. E3 UFM1-protein ligase that mediates ufmylation of target proteins. This is E3 UFM1-protein ligase 1 homolog from Drosophila mojavensis (Fruit fly).